The primary structure comprises 285 residues: K88 fimbrial protein AB (285 aa).

Residues 1 to 21 (MKKTLIALAIAASAASGMAHA) form the signal peptide.

Belongs to the fimbrial K88 protein family. K88 fimbria, 0.1-1 micrometer in length and 7 nanometers in diameter, is composed of about 100 identical subunits.

The protein localises to the fimbrium. Its function is as follows. K88 major fimbrial subunit. Fimbriae (also called pili), are polar filaments radiating from the surface of the bacterium to a length of 0.5-1.5 micrometers and numbering 100-300 per cell. They enable bacteria to colonize the epithelium of specific host organs. In Escherichia coli, this protein is K88 fimbrial protein AB (faeG).